Here is a 244-residue protein sequence, read N- to C-terminus: AA9 family lytic polysaccharide monooxygenase B (244 aa).

Positions 1–19 are cleaved as a signal peptide; that stretch reads MFLVPLLAALSLSAPKVAA. H20 is a Cu(2+) binding site. Y39 serves as a coordination point for (1,4-beta-D-glucosyl)n. 2 cysteine pairs are disulfide-bonded: C68–C189 and C111–C115. H99 lines the Cu(2+) pocket. A glycan (N-linked (GlcNAc...) asparagine) is linked at N152. The O2 site is built by H178 and Q184. Y186 provides a ligand contact to Cu(2+). Residues D224, Y226, and E229 each contribute to the (1,4-beta-D-glucosyl)n site. A glycan (N-linked (GlcNAc...) asparagine) is linked at N233.

It belongs to the polysaccharide monooxygenase AA9 family. It depends on Cu(2+) as a cofactor.

It localises to the secreted. The catalysed reaction is [(1-&gt;4)-beta-D-glucosyl]n+m + reduced acceptor + O2 = 4-dehydro-beta-D-glucosyl-[(1-&gt;4)-beta-D-glucosyl]n-1 + [(1-&gt;4)-beta-D-glucosyl]m + acceptor + H2O.. Its function is as follows. Lytic polysaccharide monooxygenase (LPMO) that depolymerizes crystalline and amorphous polysaccharides via the oxidation of scissile alpha- or beta-(1-4)-glycosidic bonds, yielding specifically C1 oxidation product. Catalysis by LPMOs requires the reduction of the active-site copper from Cu(II) to Cu(I) by a reducing agent and H(2)O(2) or O(2) as a cosubstrate. Displays catalytic activity on insoluble cellulose using I-beta microfibril model substrate. The sequence is that of AA9 family lytic polysaccharide monooxygenase B from Heterobasidion irregulare (strain TC 32-1).